A 444-amino-acid polypeptide reads, in one-letter code: Amino-acid acetyltransferase (444 aa).

The 140-residue stretch at 295 to 434 (EKVRRANIND…QALYNYQRRS (140 aa)) folds into the N-acetyltransferase domain.

The protein belongs to the acetyltransferase family. ArgA subfamily. In terms of assembly, homohexamer.

It localises to the cytoplasm. It carries out the reaction L-glutamate + acetyl-CoA = N-acetyl-L-glutamate + CoA + H(+). It participates in amino-acid biosynthesis; L-arginine biosynthesis; N(2)-acetyl-L-ornithine from L-glutamate: step 1/4. The chain is Amino-acid acetyltransferase from Proteus mirabilis (strain HI4320).